The following is a 161-amino-acid chain: 2-C-methyl-D-erythritol 2,4-cyclodiphosphate synthase (161 aa).

Residues Asp-10 and His-12 each contribute to the a divalent metal cation site. Residues 10–12 (DVH) and 36–37 (HS) each bind 4-CDP-2-C-methyl-D-erythritol 2-phosphate. Residue His-44 coordinates a divalent metal cation. Residues 58–60 (DIG), 63–67 (FPDTD), 102–108 (AQAPKMA), 134–137 (TTTE), Phe-141, and Arg-144 contribute to the 4-CDP-2-C-methyl-D-erythritol 2-phosphate site.

Belongs to the IspF family. In terms of assembly, homotrimer. Requires a divalent metal cation as cofactor.

The catalysed reaction is 4-CDP-2-C-methyl-D-erythritol 2-phosphate = 2-C-methyl-D-erythritol 2,4-cyclic diphosphate + CMP. It participates in isoprenoid biosynthesis; isopentenyl diphosphate biosynthesis via DXP pathway; isopentenyl diphosphate from 1-deoxy-D-xylulose 5-phosphate: step 4/6. In terms of biological role, involved in the biosynthesis of isopentenyl diphosphate (IPP) and dimethylallyl diphosphate (DMAPP), two major building blocks of isoprenoid compounds. Catalyzes the conversion of 4-diphosphocytidyl-2-C-methyl-D-erythritol 2-phosphate (CDP-ME2P) to 2-C-methyl-D-erythritol 2,4-cyclodiphosphate (ME-CPP) with a corresponding release of cytidine 5-monophosphate (CMP). The polypeptide is 2-C-methyl-D-erythritol 2,4-cyclodiphosphate synthase (Shewanella baltica (strain OS155 / ATCC BAA-1091)).